The primary structure comprises 296 residues: MERLTLPPGGAQAVDEYLEYRRIVGEDDGGKLFTPEEYEEYKKKVLPMRLQNRLFVSWRSPTGMDCKLVGPETLCFCTHRYKQHKTDFETVPQQRPIDLPCRVTGCQCKAYHYVPLNGTQPIRCRCKHFADQHSPALGFTCNACSKCSGFHSCFTCACGQPAYAHDTVVETRQERLAQGKPVGQDVPYAAMGGLTGFSSLAEGYMRLDDSGIGAPSVDVLDSPVSVMDHPFLRAMQPPSTSSPQPLAVGPSTQISSLRKPEEDDMAYFERQYQERIKMEKAAKKGKALPPPSTQPS.

A disordered region spans residues 235 to 263; that stretch reads MQPPSTSSPQPLAVGPSTQISSLRKPEED. Over residues 237–256 the composition is skewed to polar residues; the sequence is PPSTSSPQPLAVGPSTQISS.

This sequence belongs to the FAM221 family.

In Rattus norvegicus (Rat), this protein is Protein FAM221A (Fam221a).